A 574-amino-acid polypeptide reads, in one-letter code: MEAINLTILVIGVLFLISIVATLISSRIGAPILLVFLIIGMLAGEQGLGGITFNNPQVAFLIGSIALVIILFDGGMRTHPERFRVALAPAAMLATLGVVVTCTVTGLAAAWILGLHWLQGLLLGAILSSTDAAAVFSIFQSRGIRIKDRVASTLEIESGSNDPMAVMLTITLVGVLAEYTALDWSVLIVFLKQAIIGGAVGYGAGRLFVFLCRKLPLSFAFFPLMAVACCISVYAVTTQFEGSGFLAVYLMGYFVGNARLPQVLYILRVHDGLAWLSQIVMFLMLGLLVVPSQLLDHLLPALAIAGVLIFIARPLAVLLSLIPFHFPAKDQLFISWVGLRGAVPIILALFPWLAGVPDEHLYFNVAFVIVIVSLVFQGWSISPVARWLKLEVPKESGPDQTMPLDAIASNEVIEVVSFTLKGDSPMLDKQWQDFTVPHSAEFLGVIRDGEWLLSRDNPVFKLKDSVLVLCKMADVPDISTVLASAASSRTMTASDFFGDFVLNAQITLDELDAFYSITLPEHESHVTLADYITERFHRRVVVGDQVKLDALVLTVRQLDDHGNVKLVGIKPSDS.

A run of 13 helical transmembrane segments spans residues Ile-4–Ile-24, Ile-28–Leu-48, Pro-56–Met-76, Val-85–Thr-105, Trp-117–Phe-139, Ile-170–Phe-190, Leu-191–Leu-211, Pro-216–Val-236, Gly-244–Leu-264, Gly-272–Ser-292, Leu-302–Ile-322, Leu-332–Trp-352, and Leu-361–Ile-381. One can recognise an RCK C-terminal domain in the interval Met-402–Ser-484.

Belongs to the monovalent cation:proton antiporter 1 (CPA1) transporter (TC 2.A.36) family.

It is found in the cell inner membrane. K(+)/H(+) antiporter that extrudes potassium in exchange for external protons. Can also catalyze NH(4)(+)/H(+) antiport. Could have weak activity with Na(+). In Alkalimonas amylolytica, this protein is K(+)/H(+) antiporter NhaP (nhaP).